Consider the following 127-residue polypeptide: Fluoride-specific ion channel FluC (127 aa).

A run of 4 helical transmembrane segments spans residues 4–24, 35–55, 71–91, and 103–123; these read LLLA…LLSM, LGTL…FAWF, TGFC…VFLL, and VFVN…LFSA. Na(+)-binding residues include Gly-75 and Thr-78.

This sequence belongs to the fluoride channel Fluc/FEX (TC 1.A.43) family.

It localises to the cell inner membrane. The catalysed reaction is fluoride(in) = fluoride(out). With respect to regulation, na(+) is not transported, but it plays an essential structural role and its presence is essential for fluoride channel function. Functionally, fluoride-specific ion channel. Important for reducing fluoride concentration in the cell, thus reducing its toxicity. This Escherichia coli (strain ATCC 8739 / DSM 1576 / NBRC 3972 / NCIMB 8545 / WDCM 00012 / Crooks) protein is Fluoride-specific ion channel FluC.